The chain runs to 333 residues: Casein kinase II subunit alpha-2 (333 aa).

In terms of domain architecture, Protein kinase spans Tyr-34 to Phe-319. Residues Val-40–Val-48 and Lys-63 each bind ATP. The Proton acceptor role is filled by Asp-151.

Belongs to the protein kinase superfamily. Ser/Thr protein kinase family. CK2 subfamily. In terms of assembly, monomer. In terms of processing, autophosphorylated.

It is found in the cytoplasm. The catalysed reaction is L-seryl-[protein] + ATP = O-phospho-L-seryl-[protein] + ADP + H(+). The enzyme catalyses L-threonyl-[protein] + ATP = O-phospho-L-threonyl-[protein] + ADP + H(+). Functionally, casein kinases are operationally defined by their preferential utilization of acidic proteins such as caseins as substrates. It can phosphorylate a large number of proteins. Involved in photoperiod sensitivity (PS). Increases days-to-heading under natural day (ND) and long day (LD) conditions, but not under short day (SD) conditions. This is Casein kinase II subunit alpha-2 from Oryza sativa subsp. indica (Rice).